The primary structure comprises 260 residues: 5'-nucleotidase SurE (260 aa).

4 residues coordinate a divalent metal cation: D8, D9, S43, and N96.

Belongs to the SurE nucleotidase family. Requires a divalent metal cation as cofactor.

It localises to the cytoplasm. The catalysed reaction is a ribonucleoside 5'-phosphate + H2O = a ribonucleoside + phosphate. Nucleotidase that shows phosphatase activity on nucleoside 5'-monophosphates. This is 5'-nucleotidase SurE from Ruegeria sp. (strain TM1040) (Silicibacter sp.).